Reading from the N-terminus, the 422-residue chain is Imidazolonepropionase (422 aa).

Fe(3+) is bound by residues His82 and His84. 2 residues coordinate Zn(2+): His82 and His84. Arg91, Tyr154, and His187 together coordinate 4-imidazolone-5-propanoate. N-formimidoyl-L-glutamate is bound at residue Tyr154. His252 is a binding site for Fe(3+). Residue His252 participates in Zn(2+) binding. Glu255 lines the 4-imidazolone-5-propanoate pocket. Asp327 is a binding site for Fe(3+). Asp327 is a binding site for Zn(2+). N-formimidoyl-L-glutamate contacts are provided by Asn329 and Gly331. Ser332 lines the 4-imidazolone-5-propanoate pocket.

Belongs to the metallo-dependent hydrolases superfamily. HutI family. Requires Zn(2+) as cofactor. It depends on Fe(3+) as a cofactor.

Its subcellular location is the cytoplasm. It catalyses the reaction 4-imidazolone-5-propanoate + H2O = N-formimidoyl-L-glutamate. Its pathway is amino-acid degradation; L-histidine degradation into L-glutamate; N-formimidoyl-L-glutamate from L-histidine: step 3/3. Catalyzes the hydrolytic cleavage of the carbon-nitrogen bond in imidazolone-5-propanoate to yield N-formimidoyl-L-glutamate. It is the third step in the universal histidine degradation pathway. This is Imidazolonepropionase from Alkaliphilus oremlandii (strain OhILAs) (Clostridium oremlandii (strain OhILAs)).